A 430-amino-acid chain; its full sequence is Enolase (430 aa).

Gln-165 lines the (2R)-2-phosphoglycerate pocket. Catalysis depends on Glu-207, which acts as the Proton donor. Residues Asp-244, Glu-287, and Asp-314 each coordinate Mg(2+). The (2R)-2-phosphoglycerate site is built by Lys-339, Arg-368, Ser-369, and Lys-390. The active-site Proton acceptor is Lys-339.

It belongs to the enolase family. As to quaternary structure, component of the RNA degradosome, a multiprotein complex involved in RNA processing and mRNA degradation. It depends on Mg(2+) as a cofactor.

The protein localises to the cytoplasm. Its subcellular location is the secreted. It is found in the cell surface. The enzyme catalyses (2R)-2-phosphoglycerate = phosphoenolpyruvate + H2O. Its pathway is carbohydrate degradation; glycolysis; pyruvate from D-glyceraldehyde 3-phosphate: step 4/5. In terms of biological role, catalyzes the reversible conversion of 2-phosphoglycerate (2-PG) into phosphoenolpyruvate (PEP). It is essential for the degradation of carbohydrates via glycolysis. This chain is Enolase, found in Xylella fastidiosa (strain 9a5c).